The chain runs to 65 residues: Large ribosomal subunit protein bL35 (65 aa).

Belongs to the bacterial ribosomal protein bL35 family.

The sequence is that of Large ribosomal subunit protein bL35 from Synechococcus sp. (strain CC9605).